Reading from the N-terminus, the 153-residue chain is 6,7-dimethyl-8-ribityllumazine synthase (153 aa).

5-amino-6-(D-ribitylamino)uracil is bound by residues F21, 55-57, and 79-81; these read AFE and TVI. 84–85 is a binding site for (2S)-2-hydroxy-3-oxobutyl phosphate; it reads AT. H87 (proton donor) is an active-site residue. F112 contacts 5-amino-6-(D-ribitylamino)uracil. R126 contacts (2S)-2-hydroxy-3-oxobutyl phosphate.

It belongs to the DMRL synthase family. Forms an icosahedral capsid composed of 60 subunits, arranged as a dodecamer of pentamers.

It catalyses the reaction (2S)-2-hydroxy-3-oxobutyl phosphate + 5-amino-6-(D-ribitylamino)uracil = 6,7-dimethyl-8-(1-D-ribityl)lumazine + phosphate + 2 H2O + H(+). It participates in cofactor biosynthesis; riboflavin biosynthesis; riboflavin from 2-hydroxy-3-oxobutyl phosphate and 5-amino-6-(D-ribitylamino)uracil: step 1/2. Catalyzes the formation of 6,7-dimethyl-8-ribityllumazine by condensation of 5-amino-6-(D-ribitylamino)uracil with 3,4-dihydroxy-2-butanone 4-phosphate. This is the penultimate step in the biosynthesis of riboflavin. In Bacillus cereus (strain ATCC 10987 / NRS 248), this protein is 6,7-dimethyl-8-ribityllumazine synthase.